The primary structure comprises 297 residues: Coatomer subunit epsilon-2 (297 aa).

Belongs to the COPE family. As to quaternary structure, oligomeric complex that consists of at least the alpha, beta, beta', gamma, delta, epsilon and zeta subunits.

The protein resides in the cytoplasm. The protein localises to the golgi apparatus membrane. It localises to the cytoplasmic vesicle. It is found in the COPI-coated vesicle membrane. Its function is as follows. The coatomer is a cytosolic protein complex that binds to dilysine motifs and reversibly associates with Golgi non-clathrin-coated vesicles, which further mediate biosynthetic protein transport from the ER, via the Golgi up to the trans Golgi network. The coatomer complex is required for budding from Golgi membranes, and is essential for the retrograde Golgi-to-ER transport of dilysine-tagged proteins. This is Coatomer subunit epsilon-2 from Oryza sativa subsp. indica (Rice).